Here is a 126-residue protein sequence, read N- to C-terminus: C-type natriuretic peptide (126 aa).

An N-terminal signal peptide occupies residues Met-1–Ala-23. The interval Pro-20 to Arg-73 is disordered. Positions Lys-24 to Arg-73 are excised as a propeptide. Pro residues predominate over residues Gly-26–Pro-35. Cys-110 and Cys-126 form a disulfide bridge.

The protein belongs to the natriuretic peptide family. In terms of processing, degraded by IDE (in vitro).

It is found in the secreted. Functionally, hormone which plays a role in endochondral ossification through regulation of cartilaginous growth plate chondrocytes proliferation and differentiation. May also be vasoactive and natriuretic. Acts by specifically binding and stimulating NPR2 to produce cGMP. Binds the clearance receptor NPR3. The chain is C-type natriuretic peptide (Nppc) from Mus musculus (Mouse).